Here is a 467-residue protein sequence, read N- to C-terminus: Glycosyl hydrolase family 109 protein 1 (467 aa).

Positions 1 to 22 are cleaved as a signal peptide; that stretch reads MKKLLLNTLIGLALLTCQTSFA. NAD(+)-binding positions include 66–67, D88, 137–140, 157–158, and N186; these read MR, WKHH, and EV. Substrate-binding positions include Y215, R231, 243-246, and Y321; that span reads YATH. NAD(+) is bound at residue Y243.

Belongs to the Gfo/Idh/MocA family. Glycosyl hydrolase 109 subfamily. Requires NAD(+) as cofactor.

In terms of biological role, glycosidase. The chain is Glycosyl hydrolase family 109 protein 1 from Bacteroides thetaiotaomicron (strain ATCC 29148 / DSM 2079 / JCM 5827 / CCUG 10774 / NCTC 10582 / VPI-5482 / E50).